Here is a 578-residue protein sequence, read N- to C-terminus: Protein O-linked-mannose beta-1,4-N-acetylglucosaminyltransferase 2 (578 aa).

Residues 1–4 (MNLP) are Cytoplasmic-facing. Residues 5–25 (AVLNGLLVSVVAALLWKYVRL) traverse the membrane as a helical; Signal-anchor for type II membrane protein segment. The Lumenal portion of the chain corresponds to 26–578 (VEHTSQLEEE…PFADVLICKT (553 aa)). N-linked (GlcNAc...) asparagine glycans are attached at residues N98, N275, and N541. Positions 482-578 (RVREPKCQTS…PFADVLICKT (97 aa)) constitute a Fibronectin type-III domain.

The protein belongs to the glycosyltransferase 61 family.

It is found in the endoplasmic reticulum membrane. The enzyme catalyses 3-O-(alpha-D-mannosyl)-L-threonyl-[protein] + UDP-N-acetyl-alpha-D-glucosamine = 3-O-(N-acetyl-beta-D-glucosaminyl-(1-&gt;4)-alpha-D-mannosyl)-L-threonyl-[protein] + UDP + H(+). It functions in the pathway protein modification; protein glycosylation. Its function is as follows. O-linked mannose beta-1,4-N-acetylglucosaminyltransferase that transfers UDP-N-acetyl-D-glucosamine to the 4-position of the mannose to generate N-acetyl-D-glucosamine-beta-1,4-O-D-mannosylprotein. Involved in the biosynthesis of the phosphorylated O-mannosyl trisaccharide (N-acetylgalactosamine-beta-3-N-acetylglucosamine-beta-4-(phosphate-6-)mannose), a carbohydrate structure present in alpha-dystroglycan (DAG1), which is required for binding laminin G-like domain-containing extracellular proteins with high affinity. The polypeptide is Protein O-linked-mannose beta-1,4-N-acetylglucosaminyltransferase 2 (pomgnt2) (Danio rerio (Zebrafish)).